The following is a 196-amino-acid chain: Large ribosomal subunit protein uL10 (196 aa).

The tract at residues 169–196 is disordered; sequence KAAECPAEAPQPAAETPAEAPEAPADAE. Positions 172 to 196 are enriched in low complexity; sequence ECPAEAPQPAAETPAEAPEAPADAE.

Belongs to the universal ribosomal protein uL10 family. Part of the ribosomal stalk of the 50S ribosomal subunit. The N-terminus interacts with L11 and the large rRNA to form the base of the stalk. The C-terminus forms an elongated spine to which L12 dimers bind in a sequential fashion forming a multimeric L10(L12)X complex.

Functionally, forms part of the ribosomal stalk, playing a central role in the interaction of the ribosome with GTP-bound translation factors. The polypeptide is Large ribosomal subunit protein uL10 (Mycobacterium avium (strain 104)).